Consider the following 526-residue polypeptide: MGKVIRSLSRFGKKVGNALTSNTAKKIYSTIGKAAERFAESEIGSAAIDGLVQGSVHSILTGESYGEYVKQAVLLNVLGSGEEIPDPLSQGETEIQAKLRELEDEQRNELVRLKYNDKIKEKFGEELEEVYEFMNGAAKAEVEDEKQFDILNKAVTSYNKILTEEDLQMRRLANALQKEIGERTHAETVMVKEYRNKIDALKNAIEIERDGMQEEAIQEIAGMTRGVLEAASEEVPLIGAGMATAVATGRAIEGAYKLKKVINALSGIDLTHLRTPKIEPSVVSTILEYRTRAIPDSALAVSVLSKNRAIQENHKELIHIKDEILPRFKKAMDEEKEICGIEDKTIHPKVMMRFKIPRAQQPQIHVYSAPWDSDDVFFFHCISHHHANESFFLGFDLSIDLVHYEDLTAHWHALGAAQMAMGRTLSEAYKEFLNMAISNAYGTQMHTRRLVRSKMVHPIYLGSLHYDISFLDLRGNAQRIVYDDELQMHILRGPIHFQRRAILGALKFGCKVLGDRLDVPLFLRNA.

The tract at residues 1–42 (MGKVIRSLSRFGKKVGNALTSNTAKKIYSTIGKAAERFAESE) is involved in membrane permeabilization.

The protein belongs to the orbivirus VP5 family.

The protein resides in the virion. Its function is as follows. VP5 protein is one of the two proteins (with VP2) which constitute the virus particle outer capsid. Acts as a membrane permeabilization protein that mediates release of viral particles from endosomal compartments into the cytoplasm. Permeabilization activity is probably negatively regulated by VP2 and is triggered by endosomal degradation of VP2 and exposure to low pH. This chain is Outer capsid protein VP5 (Segment-6), found in Bluetongue virus 1 (isolate Australia) (BTV 1).